The sequence spans 147 residues: Cytochrome c-type biogenesis protein CcmE (147 aa).

At 1–9 (MKSLKKKRR) the chain is on the cytoplasmic side. Residues 10-30 (IQILVAAAVALVLAVGLIGYG) form a helical; Signal-anchor for type II membrane protein membrane-spanning segment. Topologically, residues 31 to 147 (FRDGINLYRS…EQGVYQEPNS (117 aa)) are periplasmic. H123 and Y127 together coordinate heme.

The protein belongs to the CcmE/CycJ family.

It localises to the cell inner membrane. Heme chaperone required for the biogenesis of c-type cytochromes. Transiently binds heme delivered by CcmC and transfers the heme to apo-cytochromes in a process facilitated by CcmF and CcmH. The chain is Cytochrome c-type biogenesis protein CcmE from Paracoccus denitrificans (strain Pd 1222).